The following is a 421-amino-acid chain: Trimethyllysine dioxygenase, mitochondrial (421 aa).

The N-terminal 15 residues, 1–15 (MWYHRLSHLHSRLQD), are a transit peptide targeting the mitochondrion. 2 positions are modified to N6-acetyllysine: Lys179 and Lys236. Residues His242, Asp244, and His389 each contribute to the Fe cation site.

This sequence belongs to the gamma-BBH/TMLD family. In terms of assembly, homodimer. Requires Fe(2+) as cofactor. The cofactor is L-ascorbate. All isoforms, but isoform 8, are widely expressed in adult and fetal tissues. Isoform 8 is restricted to heart and skeletal muscle.

It localises to the mitochondrion matrix. It catalyses the reaction N(6),N(6),N(6)-trimethyl-L-lysine + 2-oxoglutarate + O2 = (3S)-3-hydroxy-N(6),N(6),N(6)-trimethyl-L-lysine + succinate + CO2. It functions in the pathway amine and polyamine biosynthesis; carnitine biosynthesis. In terms of biological role, converts trimethyllysine (TML) into hydroxytrimethyllysine (HTML). The chain is Trimethyllysine dioxygenase, mitochondrial (TMLHE) from Homo sapiens (Human).